The sequence spans 105 residues: Large ribosomal subunit protein bL21 (105 aa).

Belongs to the bacterial ribosomal protein bL21 family. As to quaternary structure, part of the 50S ribosomal subunit. Contacts protein L20.

Functionally, this protein binds to 23S rRNA in the presence of protein L20. The protein is Large ribosomal subunit protein bL21 of Methylobacterium sp. (strain 4-46).